The primary structure comprises 425 residues: Enolase (425 aa).

Glutamine 162 is a (2R)-2-phosphoglycerate binding site. Glutamate 204 functions as the Proton donor in the catalytic mechanism. Mg(2+) contacts are provided by aspartate 241, glutamate 284, and aspartate 311. (2R)-2-phosphoglycerate is bound by residues lysine 336, arginine 365, serine 366, and lysine 387. Residue lysine 336 is the Proton acceptor of the active site.

This sequence belongs to the enolase family. It depends on Mg(2+) as a cofactor.

It localises to the cytoplasm. Its subcellular location is the secreted. The protein localises to the cell surface. The catalysed reaction is (2R)-2-phosphoglycerate = phosphoenolpyruvate + H2O. Its pathway is carbohydrate degradation; glycolysis; pyruvate from D-glyceraldehyde 3-phosphate: step 4/5. Its function is as follows. Catalyzes the reversible conversion of 2-phosphoglycerate (2-PG) into phosphoenolpyruvate (PEP). It is essential for the degradation of carbohydrates via glycolysis. The sequence is that of Enolase from Brucella anthropi (strain ATCC 49188 / DSM 6882 / CCUG 24695 / JCM 21032 / LMG 3331 / NBRC 15819 / NCTC 12168 / Alc 37) (Ochrobactrum anthropi).